Here is a 169-residue protein sequence, read N- to C-terminus: Neurotensin/neuromedin N (169 aa).

The N-terminal stretch at methionine 1–cysteine 22 is a signal peptide.

The protein belongs to the neurotensin family. Interacts with NTSR1. Interacts with SORT1. Interacts with SORL1. Neurotensin is cleaved and degraded by Angiotensin-converting enzyme (ACE) and neprilysin (MME).

It localises to the secreted. Its subcellular location is the cytoplasmic vesicle. It is found in the secretory vesicle. In terms of biological role, neurotensin may play an endocrine or paracrine role in the regulation of fat metabolism. It causes contraction of smooth muscle. This Rattus norvegicus (Rat) protein is Neurotensin/neuromedin N (Nts).